The primary structure comprises 255 residues: AA9 family lytic polysaccharide monooxygenase D (255 aa).

Positions 1 to 19 (MYRTLGSIALLAGGAAAHG) are cleaved as a signal peptide. Positions 18 and 92 each coordinate Cu(2+). 2 cysteine pairs are disulfide-bonded: Cys65/Cys189 and Cys104/Cys111. Residue Asn152 is glycosylated (N-linked (GlcNAc...) asparagine). Residues His178 and Gln184 each coordinate O2. Tyr186 is a binding site for Cu(2+). Asn220 carries an N-linked (GlcNAc...) asparagine glycan.

It belongs to the polysaccharide monooxygenase AA9 family. Cu(2+) serves as cofactor.

The protein localises to the secreted. It carries out the reaction [(1-&gt;4)-beta-D-glucosyl]n+m + reduced acceptor + O2 = 4-dehydro-beta-D-glucosyl-[(1-&gt;4)-beta-D-glucosyl]n-1 + [(1-&gt;4)-beta-D-glucosyl]m + acceptor + H2O.. Functionally, lytic polysaccharide monooxygenase (LPMO) that depolymerizes crystalline and amorphous polysaccharides via the oxidation of scissile alpha- or beta-(1-4)-glycosidic bonds, yielding specifically C1 oxidation product. Catalysis by LPMOs requires the reduction of the active-site copper from Cu(II) to Cu(I) by a reducing agent and H(2)O(2) or O(2) as a cosubstrate. Is active on regenerated amorphous cellulose (RAC) in the presence of ascorbic acid or 3-methylcatechol. Also acts on phosphoric acid swollen cellulose (PASC) as a substrate. The polypeptide is AA9 family lytic polysaccharide monooxygenase D (Thermothelomyces thermophilus (strain ATCC 42464 / BCRC 31852 / DSM 1799) (Sporotrichum thermophile)).